Reading from the N-terminus, the 169-residue chain is Putative adenylate kinase (169 aa).

ATP is bound by residues Gly10, Gly12, Lys13, Thr14, and Thr15. Residues 28 to 51 (HLNDLVGTEGLYDGVDADRGSKIV) form an NMP region. Residues 98–108 (DRGDSPEKAAE) are LID. Residue Arg99 participates in ATP binding.

This sequence belongs to the adenylate kinase family. AK6 subfamily. Interacts with uS11. Not a structural component of 40S pre-ribosomes, but transiently interacts with them by binding to uS11.

The catalysed reaction is AMP + ATP = 2 ADP. It carries out the reaction ATP + H2O = ADP + phosphate + H(+). In terms of biological role, broad-specificity nucleoside monophosphate (NMP) kinase that catalyzes the reversible transfer of the terminal phosphate group between nucleoside triphosphates and monophosphates. Also has ATPase activity. Involved in the late maturation steps of the 30S ribosomal particles, specifically 16S rRNA maturation. While NMP activity is not required for ribosome maturation, ATPase activity is. Associates transiently with small ribosomal subunit protein uS11. ATP hydrolysis breaks the interaction with uS11. May temporarily remove uS11 from the ribosome to enable a conformational change of the ribosomal RNA that is needed for the final maturation step of the small ribosomal subunit. The sequence is that of Putative adenylate kinase from Halobacterium salinarum (strain ATCC 29341 / DSM 671 / R1).